The chain runs to 351 residues: Nicotinate-nucleotide--dimethylbenzimidazole phosphoribosyltransferase (351 aa).

The active-site Proton acceptor is the Glu317.

This sequence belongs to the CobT family.

The catalysed reaction is 5,6-dimethylbenzimidazole + nicotinate beta-D-ribonucleotide = alpha-ribazole 5'-phosphate + nicotinate + H(+). It participates in nucleoside biosynthesis; alpha-ribazole biosynthesis; alpha-ribazole from 5,6-dimethylbenzimidazole: step 1/2. Its function is as follows. Catalyzes the synthesis of alpha-ribazole-5'-phosphate from nicotinate mononucleotide (NAMN) and 5,6-dimethylbenzimidazole (DMB). The sequence is that of Nicotinate-nucleotide--dimethylbenzimidazole phosphoribosyltransferase from Pseudomonas putida (strain ATCC 700007 / DSM 6899 / JCM 31910 / BCRC 17059 / LMG 24140 / F1).